An 86-amino-acid chain; its full sequence is Small ribosomal subunit protein bS20 (86 aa).

Belongs to the bacterial ribosomal protein bS20 family.

Binds directly to 16S ribosomal RNA. This chain is Small ribosomal subunit protein bS20, found in Novosphingobium aromaticivorans (strain ATCC 700278 / DSM 12444 / CCUG 56034 / CIP 105152 / NBRC 16084 / F199).